The following is a 168-amino-acid chain: Plastocyanin, chloroplastic (168 aa).

A chloroplast-targeting transit peptide spans 1-70 (MASVAAAAVS…SSLLLVASAN (70 aa)). Residues 71-168 (AATVKMGGDD…AGMKGVVTVS (98 aa)) enclose the Plastocyanin-like domain. 4 residues coordinate Cu cation: His108, Cys153, His156, and Met161.

The protein belongs to the plastocyanin family. Cu(2+) serves as cofactor.

The protein localises to the plastid. It is found in the chloroplast thylakoid membrane. In terms of biological role, participates in electron transfer between P700 and the cytochrome b6-f complex in photosystem I. This chain is Plastocyanin, chloroplastic (PETE), found in Physcomitrium patens (Spreading-leaved earth moss).